The chain runs to 431 residues: Histidine--tRNA ligase (431 aa).

Belongs to the class-II aminoacyl-tRNA synthetase family. As to quaternary structure, homodimer.

The protein resides in the cytoplasm. The enzyme catalyses tRNA(His) + L-histidine + ATP = L-histidyl-tRNA(His) + AMP + diphosphate + H(+). This Neisseria gonorrhoeae (strain ATCC 700825 / FA 1090) protein is Histidine--tRNA ligase.